Here is a 558-residue protein sequence, read N- to C-terminus: uncharacterized protein (558 aa).

Helical transmembrane passes span 63–83 (LTGIVVALLVVTFAFPVPSIY), 90–110 (VTFGVAPAYATLALAIGTYWI), 143–163 (VAAVHLILWDIGGALLATLYG), 168–188 (VFVTIILFSVTICGVLVATNC), 226–246 (SLGSGVPVTGIATTALYVLLV), and 258–278 (VLILSITTLIFGFLVMWILAW). Residues 279-330 (LTAAPVRVVRAALKRVEQGDLRGDLVVFDGTELGELQRGFNAMVNGLRERER) enclose the HAMP domain. Residues 362–486 (AVVFVDIVGS…KPVNQAARLC (125 aa)) form the Guanylate cyclase domain. A disordered region spans residues 529–558 (TQLASPHRRPPGSIHLTAEHAEEIRTDRLG). The segment covering 545–558 (TAEHAEEIRTDRLG) has biased composition (basic and acidic residues).

Belongs to the adenylyl cyclase class-3 family.

Its subcellular location is the cell membrane. This is an uncharacterized protein from Mycobacterium tuberculosis (strain CDC 1551 / Oshkosh).